A 379-amino-acid polypeptide reads, in one-letter code: Probable G-protein coupled receptor 27 (379 aa).

Topologically, residues 1–26 are extracellular; the sequence is MANASEPGGGGSGGGAEAAALGLRLA. The N-linked (GlcNAc...) asparagine glycan is linked to Asn3. Residues 27–47 form a helical membrane-spanning segment; that stretch reads TLSLLLCVSLAGNVLFALLIV. Topologically, residues 48–58 are cytoplasmic; the sequence is RERSLHRAPYY. Residues 59–79 form a helical membrane-spanning segment; it reads LLLDLCLADGLRALACLPAVM. Residues 80-100 lie on the Extracellular side of the membrane; sequence LAARRAAAAAGTPPGALGCKL. A disulfide bridge links Cys98 with Cys175. A helical transmembrane segment spans residues 101 to 121; the sequence is LAFLAALFCFHAAFLLLGVGV. Over 122–142 the chain is Cytoplasmic; the sequence is TRYLAIAHHRFYAERLAGWPC. The chain crosses the membrane as a helical span at residues 143–163; it reads AAMLVCAAWALALAAAFPPVL. The Extracellular portion of the chain corresponds to 164–185; that stretch reads DGGGADDEDAPCALEQRPDGAP. A helical transmembrane segment spans residues 186 to 206; the sequence is GALGFLLLLAAVVGATHLVYL. Topologically, residues 207 to 289 are cytoplasmic; it reads RLLFFIHDRR…FKTEKRLCKM (83 aa). A helical membrane pass occupies residues 290-310; that stretch reads FYAITLLFLLLWGPYVVASYL. Residues 311-324 are Extracellular-facing; sequence RVLVRPGAVPQAYL. Residues 325–345 traverse the membrane as a helical segment; it reads TASVWLTFAQAGINPVVCFLF. Topologically, residues 346 to 379 are cytoplasmic; that stretch reads NRELRDCFRAQFPCCQSPQATQATLPCDLKGIGL.

This sequence belongs to the G-protein coupled receptor 1 family.

It localises to the cell membrane. Orphan receptor. Possible candidate for amine-like G-protein coupled receptor. In Mus musculus (Mouse), this protein is Probable G-protein coupled receptor 27 (Gpr27).